A 142-amino-acid chain; its full sequence is Hemoglobin subunit alpha-1 (142 aa).

The region spanning 2-142 (LLSADDKKHI…VSTVLTSKYR (141 aa)) is the Globin domain. Residue His-59 coordinates O2. Heme b is bound at residue His-88.

It belongs to the globin family. As to quaternary structure, heterotetramer of two alpha chains and two beta chains. In terms of tissue distribution, red blood cells.

Involved in oxygen transport from the lung to the various peripheral tissues. The protein is Hemoglobin subunit alpha-1 (hba1) of Xenopus laevis (African clawed frog).